The primary structure comprises 307 residues: N-acetylneuraminate lyase (307 aa).

Residues T51 and T52 each coordinate aceneuramate. Residue Y143 is the Proton donor of the active site. K173 (schiff-base intermediate with substrate) is an active-site residue. S175, G199, D201, E202, and S218 together coordinate aceneuramate.

It belongs to the DapA family. NanA subfamily. Homotetramer.

It is found in the cytoplasm. It catalyses the reaction aceneuramate = aldehydo-N-acetyl-D-mannosamine + pyruvate. It functions in the pathway amino-sugar metabolism; N-acetylneuraminate degradation. Functionally, catalyzes the cleavage of N-acetylneuraminic acid (sialic acid) to form pyruvate and N-acetylmannosamine via a Schiff base intermediate. It prevents sialic acids from being recycled and returning to the cell surface. Involved in the N-glycolylneuraminic acid (Neu5Gc) degradation pathway. This Danio rerio (Zebrafish) protein is N-acetylneuraminate lyase.